Here is a 361-residue protein sequence, read N- to C-terminus: tRNA-specific 2-thiouridylase MnmA (361 aa).

Residues 11 to 18 and Met37 contribute to the ATP site; that span reads GMSGGVDS. Residues 97-99 form an interaction with target base in tRNA region; that stretch reads NPD. Cys102 serves as the catalytic Nucleophile. Cys102 and Cys199 form a disulfide bridge. Residue Gly126 coordinates ATP. Positions 149–151 are interaction with tRNA; the sequence is KDQ. Cys199 serves as the catalytic Cysteine persulfide intermediate. The tract at residues 311–312 is interaction with tRNA; it reads RY.

This sequence belongs to the MnmA/TRMU family.

Its subcellular location is the cytoplasm. It carries out the reaction S-sulfanyl-L-cysteinyl-[protein] + uridine(34) in tRNA + AH2 + ATP = 2-thiouridine(34) in tRNA + L-cysteinyl-[protein] + A + AMP + diphosphate + H(+). Its function is as follows. Catalyzes the 2-thiolation of uridine at the wobble position (U34) of tRNA, leading to the formation of s(2)U34. This is tRNA-specific 2-thiouridylase MnmA from Cupriavidus taiwanensis (strain DSM 17343 / BCRC 17206 / CCUG 44338 / CIP 107171 / LMG 19424 / R1) (Ralstonia taiwanensis (strain LMG 19424)).